The primary structure comprises 319 residues: Porphobilinogen deaminase 1 (319 aa).

At Cys244 the chain carries S-(dipyrrolylmethanemethyl)cysteine.

The protein belongs to the HMBS family. In terms of assembly, monomer. It depends on dipyrromethane as a cofactor.

It catalyses the reaction 4 porphobilinogen + H2O = hydroxymethylbilane + 4 NH4(+). The protein operates within porphyrin-containing compound metabolism; protoporphyrin-IX biosynthesis; coproporphyrinogen-III from 5-aminolevulinate: step 2/4. Functionally, tetrapolymerization of the monopyrrole PBG into the hydroxymethylbilane pre-uroporphyrinogen in several discrete steps. This is Porphobilinogen deaminase 1 (hemC1) from Streptomyces coelicolor (strain ATCC BAA-471 / A3(2) / M145).